Consider the following 509-residue polypeptide: Lysine--tRNA ligase (509 aa).

Mg(2+)-binding residues include Glu418 and Glu425.

It belongs to the class-II aminoacyl-tRNA synthetase family. In terms of assembly, homodimer. Mg(2+) serves as cofactor.

The protein localises to the cytoplasm. The enzyme catalyses tRNA(Lys) + L-lysine + ATP = L-lysyl-tRNA(Lys) + AMP + diphosphate. This Acinetobacter baumannii (strain AB307-0294) protein is Lysine--tRNA ligase.